Reading from the N-terminus, the 145-residue chain is Protein FAM216B (145 aa).

Positions 92–121 (TKRASAKAGPHRTVPQRAAGRTRTQPSARP) are disordered.

Belongs to the FAM216 family.

The polypeptide is Protein FAM216B (FAM216B) (Bos taurus (Bovine)).